A 211-amino-acid chain; its full sequence is MSRVQISTVLAIDTATPAVTAGIVRRHDLVVLGERVTVDARAHAERLTPNVLAALADAALTMADLDAVVVGCGPGPFTGLRAGMASAAAYGHALGIPVYGVCSLDAIGGQTIGDTLVVTDARRREVYWARYCDGIRTVGPAVNAAADVDPGPALAVAGAPEHAALFALPCVEPSRPSPAGLVAAVNWADKPAPLVPLYLRRPDAKPLAVCT.

Residues 1 to 20 (MSRVQISTVLAIDTATPAVT) form the signal peptide.

To M.leprae ML0378.

This is an uncharacterized protein from Mycobacterium tuberculosis (strain CDC 1551 / Oshkosh).